A 256-amino-acid chain; its full sequence is Triosephosphate isomerase (256 aa).

9 to 11 is a binding site for substrate; sequence NWK. The active-site Electrophile is the H97. Catalysis depends on E169, which acts as the Proton acceptor. Residues G175, S214, and 235–236 each bind substrate; that span reads GG.

The protein belongs to the triosephosphate isomerase family. In terms of assembly, homodimer.

Its subcellular location is the cytoplasm. The catalysed reaction is D-glyceraldehyde 3-phosphate = dihydroxyacetone phosphate. Its pathway is carbohydrate biosynthesis; gluconeogenesis. The protein operates within carbohydrate degradation; glycolysis; D-glyceraldehyde 3-phosphate from glycerone phosphate: step 1/1. Functionally, involved in the gluconeogenesis. Catalyzes stereospecifically the conversion of dihydroxyacetone phosphate (DHAP) to D-glyceraldehyde-3-phosphate (G3P). The sequence is that of Triosephosphate isomerase from Aliivibrio salmonicida (strain LFI1238) (Vibrio salmonicida (strain LFI1238)).